The primary structure comprises 738 residues: NAD(P)H-quinone oxidoreductase subunit 5, chloroplastic (738 aa).

16 helical membrane passes run W9–F29, W40–I60, I89–I109, F125–I145, I147–T167, G185–F205, A230–L250, T258–A278, L280–I300, L327–I347, A354–S374, I396–S416, W425–Y445, L546–F566, F603–Y623, and Y718–F738.

Belongs to the complex I subunit 5 family. As to quaternary structure, NDH is composed of at least 16 different subunits, 5 of which are encoded in the nucleus.

It is found in the plastid. The protein resides in the chloroplast thylakoid membrane. It carries out the reaction a plastoquinone + NADH + (n+1) H(+)(in) = a plastoquinol + NAD(+) + n H(+)(out). The enzyme catalyses a plastoquinone + NADPH + (n+1) H(+)(in) = a plastoquinol + NADP(+) + n H(+)(out). NDH shuttles electrons from NAD(P)H:plastoquinone, via FMN and iron-sulfur (Fe-S) centers, to quinones in the photosynthetic chain and possibly in a chloroplast respiratory chain. The immediate electron acceptor for the enzyme in this species is believed to be plastoquinone. Couples the redox reaction to proton translocation, and thus conserves the redox energy in a proton gradient. In Ligustrum vulgare (Common privet), this protein is NAD(P)H-quinone oxidoreductase subunit 5, chloroplastic (ndhF).